The following is a 278-amino-acid chain: 4-diphosphocytidyl-2-C-methyl-D-erythritol kinase (278 aa).

Residue Lys9 is part of the active site. Residue 89–99 participates in ATP binding; sequence PVASGIGGGSA. Asp128 is a catalytic residue.

The protein belongs to the GHMP kinase family. IspE subfamily.

The enzyme catalyses 4-CDP-2-C-methyl-D-erythritol + ATP = 4-CDP-2-C-methyl-D-erythritol 2-phosphate + ADP + H(+). It functions in the pathway isoprenoid biosynthesis; isopentenyl diphosphate biosynthesis via DXP pathway; isopentenyl diphosphate from 1-deoxy-D-xylulose 5-phosphate: step 3/6. Functionally, catalyzes the phosphorylation of the position 2 hydroxy group of 4-diphosphocytidyl-2C-methyl-D-erythritol. This Cereibacter sphaeroides (strain ATCC 17025 / ATH 2.4.3) (Rhodobacter sphaeroides) protein is 4-diphosphocytidyl-2-C-methyl-D-erythritol kinase.